A 476-amino-acid chain; its full sequence is GTPase Der (476 aa).

EngA-type G domains follow at residues 3–167 and 205–380; these read FTVA…GEDM and LRVA…KTWN. GTP contacts are provided by residues 9–16, 56–60, 119–122, 211–218, 258–262, and 323–326; these read GRPNVGKS, DTAGL, NKSE, GRPNAGKS, DTAGM, and NKWD. The KH-like domain maps to 381–465; that stretch reads RRISTAKLNR…PIRVHYRGSD (85 aa).

It belongs to the TRAFAC class TrmE-Era-EngA-EngB-Septin-like GTPase superfamily. EngA (Der) GTPase family. Associates with the 50S ribosomal subunit.

In terms of biological role, GTPase that plays an essential role in the late steps of ribosome biogenesis. This Agrobacterium fabrum (strain C58 / ATCC 33970) (Agrobacterium tumefaciens (strain C58)) protein is GTPase Der.